Reading from the N-terminus, the 531-residue chain is CTP synthase (531 aa).

The amidoligase domain stretch occupies residues 1–267 (MTKYIIITGG…ASKILSKLNL (267 aa)). Serine 13 lines the CTP pocket. Position 13 (serine 13) interacts with UTP. 14–19 (SVGKGT) provides a ligand contact to ATP. Tyrosine 54 lines the L-glutamine pocket. Aspartate 71 serves as a coordination point for ATP. Mg(2+) is bound by residues aspartate 71 and glutamate 141. CTP-binding positions include 148-150 (DIE), 188-193 (KTKPLQ), and lysine 224. Residues 188 to 193 (KTKPLQ) and lysine 224 each bind UTP. Positions 292–531 (KIALVGKYTK…IGFLRAAAGV (240 aa)) constitute a Glutamine amidotransferase type-1 domain. Glycine 355 contacts L-glutamine. Cysteine 382 functions as the Nucleophile; for glutamine hydrolysis in the catalytic mechanism. Residues 383-386 (YGMQ), glutamate 406, and arginine 463 contribute to the L-glutamine site. Residues histidine 507 and glutamate 509 contribute to the active site.

Belongs to the CTP synthase family. Homotetramer.

It catalyses the reaction UTP + L-glutamine + ATP + H2O = CTP + L-glutamate + ADP + phosphate + 2 H(+). The catalysed reaction is L-glutamine + H2O = L-glutamate + NH4(+). It carries out the reaction UTP + NH4(+) + ATP = CTP + ADP + phosphate + 2 H(+). The protein operates within pyrimidine metabolism; CTP biosynthesis via de novo pathway; CTP from UDP: step 2/2. Its activity is regulated as follows. Allosterically activated by GTP, when glutamine is the substrate; GTP has no effect on the reaction when ammonia is the substrate. The allosteric effector GTP functions by stabilizing the protein conformation that binds the tetrahedral intermediate(s) formed during glutamine hydrolysis. Inhibited by the product CTP, via allosteric rather than competitive inhibition. In terms of biological role, catalyzes the ATP-dependent amination of UTP to CTP with either L-glutamine or ammonia as the source of nitrogen. Regulates intracellular CTP levels through interactions with the four ribonucleotide triphosphates. This chain is CTP synthase, found in Sulfurisphaera tokodaii (strain DSM 16993 / JCM 10545 / NBRC 100140 / 7) (Sulfolobus tokodaii).